The primary structure comprises 180 residues: Translation initiation factor IF-3 (180 aa).

Belongs to the IF-3 family. In terms of assembly, monomer.

The protein resides in the cytoplasm. Its function is as follows. IF-3 binds to the 30S ribosomal subunit and shifts the equilibrium between 70S ribosomes and their 50S and 30S subunits in favor of the free subunits, thus enhancing the availability of 30S subunits on which protein synthesis initiation begins. This Shewanella oneidensis (strain ATCC 700550 / JCM 31522 / CIP 106686 / LMG 19005 / NCIMB 14063 / MR-1) protein is Translation initiation factor IF-3.